Consider the following 699-residue polypeptide: Elongation factor G (699 aa).

Residues 8 to 288 (EDYRNFGIMA…AVVDYLPSPM (281 aa)) form the tr-type G domain. GTP contacts are provided by residues 17-24 (AHIDAGKT), 86-90 (DTPGH), and 140-143 (NKMD).

The protein belongs to the TRAFAC class translation factor GTPase superfamily. Classic translation factor GTPase family. EF-G/EF-2 subfamily.

The protein resides in the cytoplasm. Catalyzes the GTP-dependent ribosomal translocation step during translation elongation. During this step, the ribosome changes from the pre-translocational (PRE) to the post-translocational (POST) state as the newly formed A-site-bound peptidyl-tRNA and P-site-bound deacylated tRNA move to the P and E sites, respectively. Catalyzes the coordinated movement of the two tRNA molecules, the mRNA and conformational changes in the ribosome. This chain is Elongation factor G, found in Rhizobium leguminosarum bv. trifolii (strain WSM2304).